Reading from the N-terminus, the 131-residue chain is Protein FAM107B (131 aa).

The residue at position 2 (alanine 2) is an N-acetylalanine. The segment at methionine 39–aspartate 79 is disordered. Position 50 is an N6-acetyllysine (lysine 50). A compositionally biased stretch (basic and acidic residues) spans glutamate 52–aspartate 79. A coiled-coil region spans residues arginine 61–valine 112.

It belongs to the FAM107 family. In terms of tissue distribution, expressed in the hippocampus and hypothalamus. Expressed in the pontine nuclei and reticulotegmental nucleus. Expressed in Purkinje cell and nuclear layers of the cerebelum. Expressed in the choroid plexus. Expressed in hippocampal granule neurons of the dente gyrus.

This is Protein FAM107B from Mus musculus (Mouse).